Reading from the N-terminus, the 467-residue chain is UDP-N-acetylmuramate--L-alanine ligase (467 aa).

Position 112–118 (112–118 (GTHGKTT)) interacts with ATP.

The protein belongs to the MurCDEF family.

It localises to the cytoplasm. It carries out the reaction UDP-N-acetyl-alpha-D-muramate + L-alanine + ATP = UDP-N-acetyl-alpha-D-muramoyl-L-alanine + ADP + phosphate + H(+). It participates in cell wall biogenesis; peptidoglycan biosynthesis. Functionally, cell wall formation. The chain is UDP-N-acetylmuramate--L-alanine ligase from Polaromonas sp. (strain JS666 / ATCC BAA-500).